The chain runs to 157 residues: Protein-export protein SecB (157 aa).

The protein belongs to the SecB family. Homotetramer, a dimer of dimers. One homotetramer interacts with 1 SecA dimer.

The protein localises to the cytoplasm. Functionally, one of the proteins required for the normal export of preproteins out of the cell cytoplasm. It is a molecular chaperone that binds to a subset of precursor proteins, maintaining them in a translocation-competent state. It also specifically binds to its receptor SecA. The chain is Protein-export protein SecB from Tolumonas auensis (strain DSM 9187 / NBRC 110442 / TA 4).